The sequence spans 904 residues: DNA polymerase I (904 aa).

Residues 186 to 279 (TPRQYPDFAA…DTLRLQPWDR (94 aa)) form the 5'-3' exonuclease domain. One can recognise a 3'-5' exonuclease domain in the interval 317 to 493 (RGGALAPGTV…LADALDAELA (177 aa)).

It belongs to the DNA polymerase type-A family. Single-chain monomer with multiple functions.

It catalyses the reaction DNA(n) + a 2'-deoxyribonucleoside 5'-triphosphate = DNA(n+1) + diphosphate. Functionally, in addition to polymerase activity, this DNA polymerase exhibits 3'-5' and 5'-3' exonuclease activity. This Mycobacterium bovis (strain ATCC BAA-935 / AF2122/97) protein is DNA polymerase I (polA).